We begin with the raw amino-acid sequence, 1177 residues long: DNA-directed RNA polymerase subunit beta (1177 aa).

Residues 1154 to 1177 (RDTEDDDDHQSADKLNVEVETTKE) form a disordered region. The span at 1162 to 1177 (HQSADKLNVEVETTKE) shows a compositional bias: basic and acidic residues.

This sequence belongs to the RNA polymerase beta chain family. In terms of assembly, the RNAP catalytic core consists of 2 alpha, 1 beta, 1 beta' and 1 omega subunit. When a sigma factor is associated with the core the holoenzyme is formed, which can initiate transcription.

The enzyme catalyses RNA(n) + a ribonucleoside 5'-triphosphate = RNA(n+1) + diphosphate. DNA-dependent RNA polymerase catalyzes the transcription of DNA into RNA using the four ribonucleoside triphosphates as substrates. The protein is DNA-directed RNA polymerase subunit beta of Bacillus mycoides (strain KBAB4) (Bacillus weihenstephanensis).